The following is a 444-amino-acid chain: Glutamyl-tRNA reductase (444 aa).

Residues 49–52 (TCNR), S109, 114–116 (ETQ), and Q120 contribute to the substrate site. Residue C50 is the Nucleophile of the active site. 189 to 194 (GAGKMG) contributes to the NADP(+) binding site.

The protein belongs to the glutamyl-tRNA reductase family. As to quaternary structure, homodimer.

It catalyses the reaction (S)-4-amino-5-oxopentanoate + tRNA(Glu) + NADP(+) = L-glutamyl-tRNA(Glu) + NADPH + H(+). The protein operates within porphyrin-containing compound metabolism; protoporphyrin-IX biosynthesis; 5-aminolevulinate from L-glutamyl-tRNA(Glu): step 1/2. In terms of biological role, catalyzes the NADPH-dependent reduction of glutamyl-tRNA(Glu) to glutamate 1-semialdehyde (GSA). The protein is Glutamyl-tRNA reductase of Bacillus cereus (strain 03BB102).